Here is a 212-residue protein sequence, read N- to C-terminus: Protein-L-isoaspartate O-methyltransferase (212 aa).

Residue serine 60 is part of the active site.

It belongs to the methyltransferase superfamily. L-isoaspartyl/D-aspartyl protein methyltransferase family.

The protein localises to the cytoplasm. The enzyme catalyses [protein]-L-isoaspartate + S-adenosyl-L-methionine = [protein]-L-isoaspartate alpha-methyl ester + S-adenosyl-L-homocysteine. Functionally, catalyzes the methyl esterification of L-isoaspartyl residues in peptides and proteins that result from spontaneous decomposition of normal L-aspartyl and L-asparaginyl residues. It plays a role in the repair and/or degradation of damaged proteins. This Methanococcus maripaludis (strain C7 / ATCC BAA-1331) protein is Protein-L-isoaspartate O-methyltransferase.